The following is a 351-amino-acid chain: Histidinol-phosphate aminotransferase (351 aa).

Position 214 is an N6-(pyridoxal phosphate)lysine (Lys214).

The protein belongs to the class-II pyridoxal-phosphate-dependent aminotransferase family. Histidinol-phosphate aminotransferase subfamily. Pyridoxal 5'-phosphate is required as a cofactor.

It catalyses the reaction L-histidinol phosphate + 2-oxoglutarate = 3-(imidazol-4-yl)-2-oxopropyl phosphate + L-glutamate. The protein operates within amino-acid biosynthesis; L-histidine biosynthesis; L-histidine from 5-phospho-alpha-D-ribose 1-diphosphate: step 7/9. This Methanosphaerula palustris (strain ATCC BAA-1556 / DSM 19958 / E1-9c) protein is Histidinol-phosphate aminotransferase.